Here is a 257-residue protein sequence, read N- to C-terminus: TLC domain-containing protein 3A (257 aa).

The next 7 helical transmembrane spans lie at 1–21, 42–62, 71–91, 114–134, 142–162, 181–201, and 220–240; these read MLLT…LSIW, LVSS…IISC, WLAT…FYAM, LIEN…LVPI, LGDF…FVSL, GILT…FMYW, and LHCN…FSLL. A TLC domain is found at 33–249; that stretch reads DDCLTVGTRL…LCKKAARLFD (217 aa).

Interacts with GGT7 isoform 3 and SLC3A2.

Its subcellular location is the cell membrane. In Mus musculus (Mouse), this protein is TLC domain-containing protein 3A (Tlcd3a).